Reading from the N-terminus, the 489-residue chain is ERO1-like protein alpha (489 aa).

The signal sequence occupies residues 1–20 (METCVLLLGLFLTSVHVTTA). Intrachain disulfides connect C27–C40, C29–C38, C77–C382, C86–C91, C86–C123, C91–C96, C200–C232, and C385–C388. FAD is bound by residues R179, T181, and W192. The FAD site is built by S243 and H246. N-linked (GlcNAc...) asparagine glycosylation is present at N271. FAD is bound by residues R278 and R291. N-linked (GlcNAc...) asparagine glycosylation is present at N375.

It belongs to the EROs family. As to quaternary structure, predominantly monomer. May function both as a monomer and a homodimer. It depends on FAD as a cofactor. The Cys-86/Cys-91 and Cys-385/Cys-388 disulfide bonds constitute the redox-active center. The Cys-86/Cys-91 disulfide bond may accept electron from protein disulfide isomerase (PDI) and funnel them to the active site disulfide Cys-385/Cys-388.

Its subcellular location is the endoplasmic reticulum membrane. Enzyme activity is tightly regulated to prevent the accumulation of reactive oxygen species in the endoplasmic reticulum. Reversibly down-regulated by the formation of disulfide bonds between the active site Cys-86 and Cys-123, and between Cys-91 and Cys-96. Glutathione may be required to regulate its activity in the endoplasmic reticulum. Functionally, oxidoreductase involved in disulfide bond formation in the endoplasmic reticulum. Efficiently reoxidizes P4HB/PDI, the enzyme catalyzing protein disulfide formation, in order to allow P4HB to sustain additional rounds of disulfide formation. Following P4HB reoxidation, passes its electrons to molecular oxygen via FAD, leading to the production of reactive oxygen species (ROS) in the cell. Required for the folding of immunoglobulins. This Danio rerio (Zebrafish) protein is ERO1-like protein alpha.